Reading from the N-terminus, the 1269-residue chain is Phospholipase D A (1269 aa).

Residues 55–64 are compositionally biased toward polar residues; sequence YTSVGSAPTT. The tract at residues 55-121 is disordered; that stretch reads YTSVGSAPTT…NNNLQSPTQS (67 aa). Composition is skewed to low complexity over residues 65 to 87 and 95 to 114; these read NNNS…SGSS and NSNK…NNNN. Positions 131–192 form a coiled coil; that stretch reads SKALHDFEEK…ELKSLDELLH (62 aa). Residues 222-232 show a composition bias toward polar residues; sequence NSVTNNTPSSA. Disordered regions lie at residues 222–269 and 300–320; these read NSVT…SSST and NSYP…DPNL. Low complexity predominate over residues 233–269; it reads TPLTLSNNNNYTSSSLATSPTTNSSSSSSSSSSSSST. PLD phosphodiesterase domains are found at residues 435-462 and 704-731; these read IYWS…CFGR and EQIY…NDRS. Residues histidine 440, lysine 442, aspartate 447, histidine 709, lysine 711, and aspartate 716 contribute to the active site. Residues 803 to 835 adopt a coiled-coil conformation; sequence NNNNNSNINNNINNNNNEINNNNNNNNNNNSNE. Composition is skewed to low complexity over residues 810 to 850, 859 to 906, and 934 to 943; these read INNN…NSNS, NLPP…GTTN, and SSPQDSPQDS. 2 disordered regions span residues 810 to 966 and 983 to 1007; these read INNN…HQSP and SNEQ…TTTD. Positions 987 to 1003 are enriched in pro residues; it reads LPPPPSSTTPPPPPPPL. The stretch at 1059–1096 forms a coiled coil; it reads TTAQQQQQQQQQQQQQQQQQQQQQQQQQQQQQQQQQQQ. The interval 1116 to 1167 is disordered; the sequence is IKKKRSSISPSTSSNKLLLSGNGSGDSIRVVTDSGSSPRGQPRSMSSLHDHA. Over residues 1122–1142 the composition is skewed to low complexity; it reads SISPSTSSNKLLLSGNGSGDS. Positions 1148 to 1162 are enriched in polar residues; the sequence is DSGSSPRGQPRSMSS.

It belongs to the phospholipase D family.

The catalysed reaction is a 1,2-diacyl-sn-glycero-3-phosphocholine + H2O = a 1,2-diacyl-sn-glycero-3-phosphate + choline + H(+). Inhibited by butan-1-ol. Plays a role in cell growth. Hydrolyzes membrane phospholipids, such as PtdCho free headgroup and PtdOH (phosphatidic acid; signaling molecule on its own). Involved in the inhibition of actin-based motility and endocytosis. Its inhibition causes complete collapse of F-actin organization. This is Phospholipase D A (pldA) from Dictyostelium discoideum (Social amoeba).